The primary structure comprises 668 residues: DNA ligase (668 aa).

Residues Asp37–Asp41, Ser86–Met87, and Glu116 each bind NAD(+). The active-site N6-AMP-lysine intermediate is the Lys118. Arg139, Glu173, Lys288, and Lys312 together coordinate NAD(+). Positions 406, 409, 424, and 429 each coordinate Zn(2+). Residues Ala590–Lys668 form the BRCT domain.

This sequence belongs to the NAD-dependent DNA ligase family. LigA subfamily. Mg(2+) serves as cofactor. Requires Mn(2+) as cofactor.

The enzyme catalyses NAD(+) + (deoxyribonucleotide)n-3'-hydroxyl + 5'-phospho-(deoxyribonucleotide)m = (deoxyribonucleotide)n+m + AMP + beta-nicotinamide D-nucleotide.. Functionally, DNA ligase that catalyzes the formation of phosphodiester linkages between 5'-phosphoryl and 3'-hydroxyl groups in double-stranded DNA using NAD as a coenzyme and as the energy source for the reaction. It is essential for DNA replication and repair of damaged DNA. This chain is DNA ligase, found in Lactobacillus gasseri (strain ATCC 33323 / DSM 20243 / BCRC 14619 / CIP 102991 / JCM 1131 / KCTC 3163 / NCIMB 11718 / NCTC 13722 / AM63).